Consider the following 325-residue polypeptide: LIM and senescent cell antigen-like-containing domain protein 1 (325 aa).

Residue Ala2 is modified to N-acetylalanine. LIM zinc-binding domains lie at 10–62 (CERC…CEHD), 71–121 (CHQC…CRPC), 135–184 (CQKC…CLPC), 193–243 (CGAC…CETH), and 252–303 (CFHC…CKKC).

As to quaternary structure, component of the heterotrimeric IPP (ILK-PINCH-PARVIN) complex composed of ILK, LIMS1/PINCH and PARVA; the complex binds to F-actin via the C-terminal tail of LIMS1 and the N-terminal region of PARVA, promoting F-actin filament bundling. Formation of the IPP complex is dependent on protein kinase C and precedes integrin-mediated cell adhesion and spreading. Competes with LIMS2 for interaction with ILK. Interacts with SH3/SH2 adapter NCK2, thereby linking the complex to cell surface receptors. Interacts (via LIM zinc-binding 5) with TGFB1I1.

The protein localises to the cell junction. The protein resides in the focal adhesion. Its subcellular location is the cell membrane. Functionally, within the IPP (ILK-PINCH-PARVIN) complex, binds to F-actin, promoting F-actin bundling, a process required to generate force for actin cytoskeleton reorganization and subsequent dynamic cell adhesion events such as cell spreading and migration. The protein is LIM and senescent cell antigen-like-containing domain protein 1 (Lims1) of Mus musculus (Mouse).